A 154-amino-acid chain; its full sequence is Protein X (154 aa).

The mitochondrial targeting sequence stretch occupies residues 68 to 117 (PCALRFTSARRMETTVNAHQILPKVLHKRTLGLSAMSTTDLEAYFKDCLF).

This sequence belongs to the orthohepadnavirus protein X family. May form homodimer. May interact with host CEBPA, CFLAR, CREB1, DDB1, E4F1, HBXIP, HSPD1/HSP60, NFKBIA, POLR2E and SMAD4. Interacts with host SMC5-SMC6 complex and induces its degradation. Interacts with host TRPC4AP; leading to prevent ubiquitination of TRPC4AP. Interacts with host PLSCR1; this interaction promotes ubiquitination and degradation of HBx and impairs HBx-mediated cell proliferation. A fraction may be phosphorylated in insect cells and HepG2 cells, a human hepatoblastoma cell line. Phosphorylated in vitro by host protein kinase C or mitogen-activated protein kinase. N-acetylated in insect cells.

It is found in the host cytoplasm. Its subcellular location is the host nucleus. The protein resides in the host mitochondrion. Multifunctional protein that plays a role in silencing host antiviral defenses and promoting viral transcription. Does not seem to be essential for HBV infection. May be directly involved in development of cirrhosis and liver cancer (hepatocellular carcinoma). Most of cytosolic activities involve modulation of cytosolic calcium. The effect on apoptosis is controversial depending on the cell types in which the studies have been conducted. May induce apoptosis by localizing in mitochondria and causing loss of mitochondrial membrane potential. May also modulate apoptosis by binding host CFLAR, a key regulator of the death-inducing signaling complex (DISC). Promotes viral transcription by using the host E3 ubiquitin ligase DDB1 to target the SMC5-SMC6 complex to proteasomal degradation. This host complex would otherwise bind to viral episomal DNA, and prevents its transcription. Moderately stimulates transcription of many different viral and cellular transcription elements. Promoters and enhancers stimulated by HBx contain DNA binding sites for NF-kappa-B, AP-1, AP-2, c-EBP, ATF/CREB, or the calcium-activated factor NF-AT. The chain is Protein X from Hepatitis B virus genotype E (isolate Chimpanzee/Ch195/1999) (HBV-E).